Reading from the N-terminus, the 211-residue chain is Uracil phosphoribosyltransferase (211 aa).

5-phospho-alpha-D-ribose 1-diphosphate is bound by residues Arg78, Arg103, and 130–138 (DPMLATGAT). Uracil is bound by residues Ile195 and 200-202 (GDA). Residue Asp201 participates in 5-phospho-alpha-D-ribose 1-diphosphate binding.

It belongs to the UPRTase family. Mg(2+) is required as a cofactor.

It catalyses the reaction UMP + diphosphate = 5-phospho-alpha-D-ribose 1-diphosphate + uracil. It functions in the pathway pyrimidine metabolism; UMP biosynthesis via salvage pathway; UMP from uracil: step 1/1. With respect to regulation, allosterically activated by GTP. Catalyzes the conversion of uracil and 5-phospho-alpha-D-ribose 1-diphosphate (PRPP) to UMP and diphosphate. This chain is Uracil phosphoribosyltransferase, found in Renibacterium salmoninarum (strain ATCC 33209 / DSM 20767 / JCM 11484 / NBRC 15589 / NCIMB 2235).